Consider the following 129-residue polypeptide: Lysozyme C-3 (129 aa).

Residues 1-129 (KVYERCELAA…VSRWIRGCRL (129 aa)) enclose the C-type lysozyme domain. 4 cysteine pairs are disulfide-bonded: cysteine 6–cysteine 127, cysteine 30–cysteine 115, cysteine 64–cysteine 80, and cysteine 76–cysteine 94. Catalysis depends on residues glutamate 35 and aspartate 52.

It belongs to the glycosyl hydrolase 22 family.

It localises to the secreted. The catalysed reaction is Hydrolysis of (1-&gt;4)-beta-linkages between N-acetylmuramic acid and N-acetyl-D-glucosamine residues in a peptidoglycan and between N-acetyl-D-glucosamine residues in chitodextrins.. Functionally, lysozymes have primarily a bacteriolytic function; those in tissues and body fluids are associated with the monocyte-macrophage system and enhance the activity of immunoagents. This is Lysozyme C-3 from Anas platyrhynchos (Mallard).